The sequence spans 105 residues: Flagellar transcriptional regulator FlhD (105 aa).

It belongs to the FlhD family. Homodimer; disulfide-linked. Forms a heterohexamer composed of two FlhC and four FlhD subunits. Each FlhC binds a FlhD dimer, forming a heterotrimer, and a hexamer assembles by dimerization of two heterotrimers.

Its subcellular location is the cytoplasm. Its function is as follows. Functions in complex with FlhC as a master transcriptional regulator that regulates transcription of several flagellar and non-flagellar operons by binding to their promoter region. Activates expression of class 2 flagellar genes, including fliA, which is a flagellum-specific sigma factor that turns on the class 3 genes. Also regulates genes whose products function in a variety of physiological pathways. This is Flagellar transcriptional regulator FlhD from Nitrosomonas europaea (strain ATCC 19718 / CIP 103999 / KCTC 2705 / NBRC 14298).